Here is a 352-residue protein sequence, read N- to C-terminus: Protein RecA (352 aa).

Residue 66-73 (GPESSGKT) coordinates ATP.

It belongs to the RecA family.

The protein localises to the cytoplasm. Functionally, can catalyze the hydrolysis of ATP in the presence of single-stranded DNA, the ATP-dependent uptake of single-stranded DNA by duplex DNA, and the ATP-dependent hybridization of homologous single-stranded DNAs. It interacts with LexA causing its activation and leading to its autocatalytic cleavage. The protein is Protein RecA of Psychrobacter arcticus (strain DSM 17307 / VKM B-2377 / 273-4).